The following is a 160-amino-acid chain: Phosphopantetheine adenylyltransferase (160 aa).

Ser-10 contributes to the substrate binding site. Residues 10 to 11 (SF) and His-18 contribute to the ATP site. Positions 42, 74, and 88 each coordinate substrate. ATP contacts are provided by residues 89-91 (GLR), Glu-99, and 124-130 (YSFVSST).

This sequence belongs to the bacterial CoaD family. As to quaternary structure, homohexamer. It depends on Mg(2+) as a cofactor.

It is found in the cytoplasm. It catalyses the reaction (R)-4'-phosphopantetheine + ATP + H(+) = 3'-dephospho-CoA + diphosphate. It functions in the pathway cofactor biosynthesis; coenzyme A biosynthesis; CoA from (R)-pantothenate: step 4/5. Its function is as follows. Reversibly transfers an adenylyl group from ATP to 4'-phosphopantetheine, yielding dephospho-CoA (dPCoA) and pyrophosphate. The sequence is that of Phosphopantetheine adenylyltransferase from Leptospira biflexa serovar Patoc (strain Patoc 1 / Ames).